A 256-amino-acid polypeptide reads, in one-letter code: NAD-dependent protein deacylase 2 (256 aa).

In terms of domain architecture, Deacetylase sirtuin-type spans 1-256 (MDSHSPIATV…MPQVVSHIYR (256 aa)). Residues 25–44 (GAGL…GGLY) and 108–111 (QNID) each bind NAD(+). His-128 functions as the Proton acceptor in the catalytic mechanism. Zn(2+)-binding residues include Cys-136, Cys-139, Cys-158, and Cys-161. Residues 199 to 201 (GTT), 225 to 227 (NPG), and Ala-243 each bind NAD(+).

Belongs to the sirtuin family. Class III subfamily. Requires Zn(2+) as cofactor.

The protein resides in the cytoplasm. The enzyme catalyses N(6)-acetyl-L-lysyl-[protein] + NAD(+) + H2O = 2''-O-acetyl-ADP-D-ribose + nicotinamide + L-lysyl-[protein]. Its function is as follows. NAD-dependent protein deacetylase which modulates the activities of several proteins which are inactive in their acetylated form. This chain is NAD-dependent protein deacylase 2 (cobB2), found in Pseudomonas aeruginosa (strain ATCC 15692 / DSM 22644 / CIP 104116 / JCM 14847 / LMG 12228 / 1C / PRS 101 / PAO1).